The primary structure comprises 60 residues: Kunitz-type serine protease inhibitor conotoxin Cal9.1c (60 aa).

The propeptide occupies 1–2 (RT). Residues 7 to 57 (CELPFEEGPCFAAIRVYAYNAETGNCEQLTYGGCEGNGNRFATLEDCDNAC) form the BPTI/Kunitz inhibitor domain. 3 disulfide bridges follow: cysteine 7–cysteine 57, cysteine 16–cysteine 40, and cysteine 32–cysteine 53.

This sequence belongs to the venom Kunitz-type family. As to expression, expressed by the venom duct.

Its subcellular location is the secreted. The chain is Kunitz-type serine protease inhibitor conotoxin Cal9.1c from Californiconus californicus (California cone).